Reading from the N-terminus, the 318-residue chain is L-lactate dehydrogenase (318 aa).

NAD(+) contacts are provided by residues Val-17, Asp-38, Lys-43, Tyr-69, and 83–84; that span reads GA. The substrate site is built by Gln-86 and Arg-92. Residues Ser-105, 122-124, and Ser-147 each bind NAD(+); that span reads ATN. 124-127 contributes to the substrate binding site; that stretch reads NPVD. 152–155 contacts substrate; that stretch reads DTAR. Positions 157 and 172 each coordinate beta-D-fructose 1,6-bisphosphate. Residue His-179 is the Proton acceptor of the active site. Tyr-223 is modified (phosphotyrosine). Residue Thr-232 coordinates substrate.

It belongs to the LDH/MDH superfamily. LDH family. In terms of assembly, homotetramer.

It is found in the cytoplasm. The enzyme catalyses (S)-lactate + NAD(+) = pyruvate + NADH + H(+). It participates in fermentation; pyruvate fermentation to lactate; (S)-lactate from pyruvate: step 1/1. Its activity is regulated as follows. Allosterically activated by fructose 1,6-bisphosphate (FBP). In terms of biological role, catalyzes the conversion of lactate to pyruvate. The polypeptide is L-lactate dehydrogenase (Staphylococcus saprophyticus subsp. saprophyticus (strain ATCC 15305 / DSM 20229 / NCIMB 8711 / NCTC 7292 / S-41)).